A 642-amino-acid polypeptide reads, in one-letter code: Threonine--tRNA ligase (642 aa).

Residues 1 to 61 enclose the TGS domain; the sequence is MPVITLPDGS…ENDATLAIIT (61 aa). Residues 243–534 form a catalytic region; it reads DHRKIGKQLD…LTEEFAGFFP (292 aa). Zn(2+) is bound by residues Cys334, His385, and His511.

It belongs to the class-II aminoacyl-tRNA synthetase family. In terms of assembly, homodimer. It depends on Zn(2+) as a cofactor.

The protein resides in the cytoplasm. It catalyses the reaction tRNA(Thr) + L-threonine + ATP = L-threonyl-tRNA(Thr) + AMP + diphosphate + H(+). In terms of biological role, catalyzes the attachment of threonine to tRNA(Thr) in a two-step reaction: L-threonine is first activated by ATP to form Thr-AMP and then transferred to the acceptor end of tRNA(Thr). Also edits incorrectly charged L-seryl-tRNA(Thr). This is Threonine--tRNA ligase from Salmonella gallinarum (strain 287/91 / NCTC 13346).